The following is a 369-amino-acid chain: Protein-glutamate methylesterase/protein-glutamine glutaminase of group 3 operon (369 aa).

Positions 11-128 (RVLIVDDSAA…DLERQEASIR (118 aa)) constitute a Response regulatory domain. At D62 the chain carries 4-aspartylphosphate. The segment at 136–168 (ATETTRRRSQPEPRPLAPGPKLTADEILPARPP) is disordered. Residues 170–358 (PVPETMPVVC…LDRLAARIME (189 aa)) form the CheB-type methylesterase domain. Catalysis depends on residues S183, H209, and D305.

This sequence belongs to the CheB family. Post-translationally, phosphorylated in vitro by CheA2, but not by CheA1. Phosphorylation of the N-terminal regulatory domain activates the methylesterase activity.

It is found in the cytoplasm. It catalyses the reaction [protein]-L-glutamate 5-O-methyl ester + H2O = L-glutamyl-[protein] + methanol + H(+). The catalysed reaction is L-glutaminyl-[protein] + H2O = L-glutamyl-[protein] + NH4(+). Its function is as follows. Involved in chemotaxis. Part of a chemotaxis signal transduction system that modulates chemotaxis in response to various stimuli. Catalyzes the demethylation of specific methylglutamate residues introduced into the chemoreceptors (methyl-accepting chemotaxis proteins or MCP) by CheR. Also mediates the irreversible deamidation of specific glutamine residues to glutamic acid. In Cereibacter sphaeroides (Rhodobacter sphaeroides), this protein is Protein-glutamate methylesterase/protein-glutamine glutaminase of group 3 operon (cheB3).